A 388-amino-acid polypeptide reads, in one-letter code: MNLHEYQGKQLFAEYGLPVSKGYAVDSPKEAAEACDKIGGTQWVVKAQVHAGGRGKAGGVKLVRSKDEARAFAQQWLDKRLVTYQTDANGQPVSKILVEACTDIDKELYLGAVVDRASRRIVFMASTEGGVDIEKVAHDTPEKILKATIDPLVGAQPFQARELAFQLGLKGDQVKQFVHIFVGLAQLFQDYDLALLEVNPLVIKTDGNLHCLDAKINIDSNAIYRQPKLRDMADPSQDDPREAHAAKWELNYVALDGNIGCMVNGAGLAMGTMDIVNLHGGAPANFLDVGGGATEERVTEAFKIILSDSNVAAVLVNIFGGIVRCDMIAEGIIGAVREVGVKVPVVVRLEGNNADLGAKMLSESGLNIIGANSLTDAAIQVVKAAEGK.

One can recognise an ATP-grasp domain in the interval 9 to 244 (KQLFAEYGLP…PSQDDPREAH (236 aa)). ATP contacts are provided by residues Lys46, 53 to 55 (GRG), Glu99, Thr102, and Glu107. 2 residues coordinate Mg(2+): Asn199 and Asp213. Residues Asn264 and 321 to 323 (GIV) each bind substrate.

It belongs to the succinate/malate CoA ligase beta subunit family. In terms of assembly, heterotetramer of two alpha and two beta subunits. Requires Mg(2+) as cofactor.

It carries out the reaction succinate + ATP + CoA = succinyl-CoA + ADP + phosphate. The enzyme catalyses GTP + succinate + CoA = succinyl-CoA + GDP + phosphate. It participates in carbohydrate metabolism; tricarboxylic acid cycle; succinate from succinyl-CoA (ligase route): step 1/1. Functionally, succinyl-CoA synthetase functions in the citric acid cycle (TCA), coupling the hydrolysis of succinyl-CoA to the synthesis of either ATP or GTP and thus represents the only step of substrate-level phosphorylation in the TCA. The beta subunit provides nucleotide specificity of the enzyme and binds the substrate succinate, while the binding sites for coenzyme A and phosphate are found in the alpha subunit. The polypeptide is Succinate--CoA ligase [ADP-forming] subunit beta (Stutzerimonas stutzeri (strain A1501) (Pseudomonas stutzeri)).